A 586-amino-acid polypeptide reads, in one-letter code: uncharacterized protein (586 aa).

Coiled coils occupy residues 183 to 293 (THTE…ELEN) and 331 to 400 (FKDK…DKKN).

This is an uncharacterized protein from Bacillus subtilis (strain 168).